The primary structure comprises 88 residues: VRQELKLELKQGFKSRIEDVREEILRKRRAGKLPGDTTSILKQWWQEHSKWPYPTEDDKAKLVEETGLQLKQINNWFINQRKRNWHNN.

The ELK domain occupies 4–24 (ELKLELKQGFKSRIEDVREEI). Positions 25 to 88 (LRKRRAGKLP…NQRKRNWHNN (64 aa)) form a DNA-binding region, homeobox; TALE-type.

It belongs to the TALE/KNOX homeobox family. Highly expressed in the roots.

The protein localises to the nucleus. This chain is Homeobox protein knotted-1-like 1 (KNOX1), found in Zea mays (Maize).